Reading from the N-terminus, the 332-residue chain is Ribosomal RNA small subunit methyltransferase C (332 aa).

This sequence belongs to the methyltransferase superfamily. RsmC family. As to quaternary structure, monomer.

Its subcellular location is the cytoplasm. It carries out the reaction guanosine(1207) in 16S rRNA + S-adenosyl-L-methionine = N(2)-methylguanosine(1207) in 16S rRNA + S-adenosyl-L-homocysteine + H(+). In terms of biological role, specifically methylates the guanine in position 1207 of 16S rRNA in the 30S particle. This chain is Ribosomal RNA small subunit methyltransferase C, found in Pseudomonas fluorescens (strain ATCC BAA-477 / NRRL B-23932 / Pf-5).